We begin with the raw amino-acid sequence, 482 residues long: 23S rRNA (uracil(1939)-C(5))-methyltransferase RlmD (482 aa).

Residues methionine 1 to alanine 33 form a disordered region. Residues lysine 15–serine 28 show a composition bias toward low complexity. One can recognise a TRAM domain in the interval threonine 51–serine 108. Positions 121, 127, 130, and 208 each coordinate [4Fe-4S] cluster. Positions 313, 342, 347, 363, 390, and 411 each coordinate S-adenosyl-L-methionine. Cysteine 437 (nucleophile) is an active-site residue.

The protein belongs to the class I-like SAM-binding methyltransferase superfamily. RNA M5U methyltransferase family. RlmD subfamily.

The catalysed reaction is uridine(1939) in 23S rRNA + S-adenosyl-L-methionine = 5-methyluridine(1939) in 23S rRNA + S-adenosyl-L-homocysteine + H(+). Its function is as follows. Catalyzes the formation of 5-methyl-uridine at position 1939 (m5U1939) in 23S rRNA. This Alteromonas mediterranea (strain DSM 17117 / CIP 110805 / LMG 28347 / Deep ecotype) protein is 23S rRNA (uracil(1939)-C(5))-methyltransferase RlmD.